A 692-amino-acid polypeptide reads, in one-letter code: Elongation factor G (692 aa).

Residues 8–282 (ENTRNIGIMA…GVVDYLPSPL (275 aa)) form the tr-type G domain. Residues 17–24 (AHIDAGKT), 81–85 (DTPGH), and 135–138 (NKMD) contribute to the GTP site.

It belongs to the TRAFAC class translation factor GTPase superfamily. Classic translation factor GTPase family. EF-G/EF-2 subfamily.

It localises to the cytoplasm. Catalyzes the GTP-dependent ribosomal translocation step during translation elongation. During this step, the ribosome changes from the pre-translocational (PRE) to the post-translocational (POST) state as the newly formed A-site-bound peptidyl-tRNA and P-site-bound deacylated tRNA move to the P and E sites, respectively. Catalyzes the coordinated movement of the two tRNA molecules, the mRNA and conformational changes in the ribosome. In Geobacillus thermodenitrificans (strain NG80-2), this protein is Elongation factor G.